We begin with the raw amino-acid sequence, 324 residues long: Lactonase drp35 (324 aa).

Glu47, Ser109, Gly111, Asp129, Thr132, Tyr134, Asp137, Asn184, Asp235, and Ser236 together coordinate Ca(2+). Asp235 (proton donor) is an active-site residue.

This sequence belongs to the SMP-30/CGR1 family. It depends on Ca(2+) as a cofactor.

Its subcellular location is the cytoplasm. Functionally, exhibits lactonase activity. Acts in cells with perturbed membrane integrity and is possibly related to the membrane homeostasis. In Staphylococcus aureus (strain MRSA252), this protein is Lactonase drp35 (drp35).